Consider the following 321-residue polypeptide: Lipoyl synthase (321 aa).

Residues Cys-68, Cys-73, Cys-79, Cys-94, Cys-98, Cys-101, and Ser-308 each coordinate [4Fe-4S] cluster. One can recognise a Radical SAM core domain in the interval 80–297 (FNHGTATFMI…KAEAMAMGFT (218 aa)).

It belongs to the radical SAM superfamily. Lipoyl synthase family. [4Fe-4S] cluster serves as cofactor.

It is found in the cytoplasm. The enzyme catalyses [[Fe-S] cluster scaffold protein carrying a second [4Fe-4S](2+) cluster] + N(6)-octanoyl-L-lysyl-[protein] + 2 oxidized [2Fe-2S]-[ferredoxin] + 2 S-adenosyl-L-methionine + 4 H(+) = [[Fe-S] cluster scaffold protein] + N(6)-[(R)-dihydrolipoyl]-L-lysyl-[protein] + 4 Fe(3+) + 2 hydrogen sulfide + 2 5'-deoxyadenosine + 2 L-methionine + 2 reduced [2Fe-2S]-[ferredoxin]. Its pathway is protein modification; protein lipoylation via endogenous pathway; protein N(6)-(lipoyl)lysine from octanoyl-[acyl-carrier-protein]: step 2/2. Its function is as follows. Catalyzes the radical-mediated insertion of two sulfur atoms into the C-6 and C-8 positions of the octanoyl moiety bound to the lipoyl domains of lipoate-dependent enzymes, thereby converting the octanoylated domains into lipoylated derivatives. This chain is Lipoyl synthase, found in Yersinia pseudotuberculosis serotype O:1b (strain IP 31758).